A 680-amino-acid polypeptide reads, in one-letter code: DNA ligase (680 aa).

NAD(+)-binding positions include 44-48 (DYIYD), 94-95 (SL), and E124. K126 acts as the N6-AMP-lysine intermediate in catalysis. NAD(+) is bound by residues R147, E181, K297, and K321. Zn(2+) contacts are provided by C415, C418, C433, and C438. In terms of domain architecture, BRCT spans 598-680 (DENSFFYGKK…VDEQVKEDGK (83 aa)).

The protein belongs to the NAD-dependent DNA ligase family. LigA subfamily. It depends on Mg(2+) as a cofactor. Mn(2+) is required as a cofactor.

It catalyses the reaction NAD(+) + (deoxyribonucleotide)n-3'-hydroxyl + 5'-phospho-(deoxyribonucleotide)m = (deoxyribonucleotide)n+m + AMP + beta-nicotinamide D-nucleotide.. Functionally, DNA ligase that catalyzes the formation of phosphodiester linkages between 5'-phosphoryl and 3'-hydroxyl groups in double-stranded DNA using NAD as a coenzyme and as the energy source for the reaction. It is essential for DNA replication and repair of damaged DNA. The chain is DNA ligase from Leuconostoc mesenteroides subsp. mesenteroides (strain ATCC 8293 / DSM 20343 / BCRC 11652 / CCM 1803 / JCM 6124 / NCDO 523 / NBRC 100496 / NCIMB 8023 / NCTC 12954 / NRRL B-1118 / 37Y).